Consider the following 322-residue polypeptide: Mitochondrial uncoupling protein 4 (322 aa).

3 Solcar repeats span residues 20-114, 124-216, and 225-316; these read SKFL…LREV, YPLW…VKHY, and DNIS…IREM. Transmembrane regions (helical) follow at residues 22-39, 87-108, 126-143, 194-211, 228-247, and 287-310; these read FLLSGCAATVAELATFPL, WQGVTPAIYRHVVYSGGRMVTY, LWKSVIGGMMAGVIGQFL, PNIQRAALVNMGDLTTYD, STHGLSSLCSGLVASILGTP, and SLYKGFLPSWLRMTPWSMVFWLTY.

Belongs to the mitochondrial carrier (TC 2.A.29) family. As to quaternary structure, homotetramer.

It is found in the mitochondrion inner membrane. The protein localises to the cell projection. It localises to the neuron projection. The catalysed reaction is H(+)(in) = H(+)(out). The enzyme catalyses chloride(in) = chloride(out). Its function is as follows. Facilitates proton transport across the inner mitochondrial membrane and may dissipate excessive proton gradient associated with oxidative and metabolic stress at neuronal synapses. Regulates glutamate-induced proton conductance in astrocytes, shifting the energy metabolism toward aerobic glycolysis and lactate transfer to neurons for ATP synthesis. Can transport chloride ions with lower efficiency. The transport mechanism remains to be elucidated. The polypeptide is Mitochondrial uncoupling protein 4 (Mus musculus (Mouse)).